A 298-amino-acid chain; its full sequence is Protoheme IX farnesyltransferase (298 aa).

The next 8 helical transmembrane spans lie at 24-44, 46-66, 97-117, 118-138, 146-166, 172-192, 231-251, and 278-298; these read VVSL…PAWP, WTTI…AAAF, LVFA…VVNP, LTMW…TVLL, IVIG…AATG, ALLL…ALAL, LLPV…VLLG, and IWYL…PIPV.

This sequence belongs to the UbiA prenyltransferase family. Protoheme IX farnesyltransferase subfamily.

The protein resides in the cell inner membrane. It carries out the reaction heme b + (2E,6E)-farnesyl diphosphate + H2O = Fe(II)-heme o + diphosphate. It functions in the pathway porphyrin-containing compound metabolism; heme O biosynthesis; heme O from protoheme: step 1/1. Functionally, converts heme B (protoheme IX) to heme O by substitution of the vinyl group on carbon 2 of heme B porphyrin ring with a hydroxyethyl farnesyl side group. The chain is Protoheme IX farnesyltransferase from Thiobacillus denitrificans (strain ATCC 25259 / T1).